A 181-amino-acid polypeptide reads, in one-letter code: Adenylate kinase (181 aa).

Residue 10–15 coordinates ATP; that stretch reads GAGKGT. The segment at 30–59 is NMP; the sequence is STGDLFRANIGQATALGVEAKKYIDAGELV. Residues Thr-31, Arg-36, 57-59, 85-88, and Gln-92 contribute to the AMP site; these read ELV and GFPR. Positions 126-132 are LID; sequence ARGRADD. Arg-127 contacts ATP. Arg-129 and Arg-140 together coordinate AMP. Gly-166 is a binding site for ATP.

This sequence belongs to the adenylate kinase family. In terms of assembly, monomer.

It is found in the cytoplasm. The catalysed reaction is AMP + ATP = 2 ADP. It functions in the pathway purine metabolism; AMP biosynthesis via salvage pathway; AMP from ADP: step 1/1. Its function is as follows. Catalyzes the reversible transfer of the terminal phosphate group between ATP and AMP. Plays an important role in cellular energy homeostasis and in adenine nucleotide metabolism. The polypeptide is Adenylate kinase (Rhodococcus erythropolis (strain PR4 / NBRC 100887)).